Consider the following 101-residue polypeptide: NADH-quinone oxidoreductase subunit K (101 aa).

A run of 3 helical transmembrane segments spans residues 4–24, 30–50, and 61–81; these read LAHF…GIFL, IVLL…FVAF, and VFVF…LAIL.

The protein belongs to the complex I subunit 4L family. As to quaternary structure, NDH-1 is composed of 14 different subunits. Subunits NuoA, H, J, K, L, M, N constitute the membrane sector of the complex.

The protein localises to the cell inner membrane. The enzyme catalyses a quinone + NADH + 5 H(+)(in) = a quinol + NAD(+) + 4 H(+)(out). Functionally, NDH-1 shuttles electrons from NADH, via FMN and iron-sulfur (Fe-S) centers, to quinones in the respiratory chain. The immediate electron acceptor for the enzyme in this species is believed to be ubiquinone. Couples the redox reaction to proton translocation (for every two electrons transferred, four hydrogen ions are translocated across the cytoplasmic membrane), and thus conserves the redox energy in a proton gradient. This Cupriavidus metallidurans (strain ATCC 43123 / DSM 2839 / NBRC 102507 / CH34) (Ralstonia metallidurans) protein is NADH-quinone oxidoreductase subunit K.